Reading from the N-terminus, the 276-residue chain is Formamidopyrimidine-DNA glycosylase (276 aa).

Residue Pro2 is the Schiff-base intermediate with DNA of the active site. Glu3 serves as the catalytic Proton donor. The active-site Proton donor; for beta-elimination activity is Lys58. DNA contacts are provided by His92, Arg111, and Lys154. An FPG-type zinc finger spans residues 239-273 (QVYGHAGEECNNCGTILEKIKVNGRGTTFCPHCQV). Catalysis depends on Arg263, which acts as the Proton donor; for delta-elimination activity.

This sequence belongs to the FPG family. Monomer. Zn(2+) is required as a cofactor.

It catalyses the reaction Hydrolysis of DNA containing ring-opened 7-methylguanine residues, releasing 2,6-diamino-4-hydroxy-5-(N-methyl)formamidopyrimidine.. It carries out the reaction 2'-deoxyribonucleotide-(2'-deoxyribose 5'-phosphate)-2'-deoxyribonucleotide-DNA = a 3'-end 2'-deoxyribonucleotide-(2,3-dehydro-2,3-deoxyribose 5'-phosphate)-DNA + a 5'-end 5'-phospho-2'-deoxyribonucleoside-DNA + H(+). Its function is as follows. Involved in base excision repair of DNA damaged by oxidation or by mutagenic agents. Acts as a DNA glycosylase that recognizes and removes damaged bases. Has a preference for oxidized purines, such as 7,8-dihydro-8-oxoguanine (8-oxoG). Has AP (apurinic/apyrimidinic) lyase activity and introduces nicks in the DNA strand. Cleaves the DNA backbone by beta-delta elimination to generate a single-strand break at the site of the removed base with both 3'- and 5'-phosphates. This chain is Formamidopyrimidine-DNA glycosylase, found in Lactobacillus johnsonii (strain CNCM I-12250 / La1 / NCC 533).